The following is a 110-amino-acid chain: Acylphosphatase (110 aa).

The 89-residue stretch at 20–108 (RAHIFVRGKV…GEFNDFSILP (89 aa)) folds into the Acylphosphatase-like domain. Residues R35 and N53 contribute to the active site.

Belongs to the acylphosphatase family.

It catalyses the reaction an acyl phosphate + H2O = a carboxylate + phosphate + H(+). The protein is Acylphosphatase (acyP) of Pyrobaculum calidifontis (strain DSM 21063 / JCM 11548 / VA1).